The sequence spans 281 residues: N-acetylmuramic acid 6-phosphate etherase (281 aa).

One can recognise an SIS domain in the interval 63–226 (IVPRMKQGGR…TTSVMIQLGR (164 aa)). Glu91 acts as the Proton donor in catalysis. The active site involves Glu122.

It belongs to the GCKR-like family. MurNAc-6-P etherase subfamily. As to quaternary structure, homodimer.

It catalyses the reaction N-acetyl-D-muramate 6-phosphate + H2O = N-acetyl-D-glucosamine 6-phosphate + (R)-lactate. It participates in amino-sugar metabolism; N-acetylmuramate degradation. Its function is as follows. Specifically catalyzes the cleavage of the D-lactyl ether substituent of MurNAc 6-phosphate, producing GlcNAc 6-phosphate and D-lactate. This Bacteroides fragilis (strain ATCC 25285 / DSM 2151 / CCUG 4856 / JCM 11019 / LMG 10263 / NCTC 9343 / Onslow / VPI 2553 / EN-2) protein is N-acetylmuramic acid 6-phosphate etherase.